The primary structure comprises 203 residues: A-type ATP synthase subunit E (203 aa).

This sequence belongs to the V-ATPase E subunit family. As to quaternary structure, has multiple subunits with at least A(3), B(3), C, D, E, F, H, I and proteolipid K(x).

Its subcellular location is the cell membrane. Its function is as follows. Component of the A-type ATP synthase that produces ATP from ADP in the presence of a proton gradient across the membrane. The chain is A-type ATP synthase subunit E from Thermococcus kodakarensis (strain ATCC BAA-918 / JCM 12380 / KOD1) (Pyrococcus kodakaraensis (strain KOD1)).